A 131-amino-acid chain; its full sequence is Histone H2B.2 (131 aa).

The segment covering 1-19 (MSAKAEKKPASKAPAEKKP) has biased composition (basic and acidic residues). The interval 1–38 (MSAKAEKKPASKAPAEKKPAAKKTAPSSDGKKRTKARK) is disordered. N6-acetyllysine; alternate is present on residues K7 and K8. Residues K7 and K8 each participate in a glycyl lysine isopeptide (Lys-Gly) (interchain with G-Cter in SUMO); alternate cross-link. Phosphoserine is present on S11. K12 carries the post-translational modification N6-acetyllysine. Residue K17 is modified to N6-acetyllysine; alternate. A Glycyl lysine isopeptide (Lys-Gly) (interchain with G-Cter in SUMO); alternate cross-link involves residue K17. K18 is covalently cross-linked (Glycyl lysine isopeptide (Lys-Gly) (interchain with G-Cter in SUMO)). A Glycyl lysine isopeptide (Lys-Gly) (interchain with G-Cter in ubiquitin) cross-link involves residue K124.

The protein belongs to the histone H2B family. The nucleosome is a histone octamer containing two molecules each of H2A, H2B, H3 and H4 assembled in one H3-H4 heterotetramer and two H2A-H2B heterodimers. The octamer wraps approximately 147 bp of DNA. Monoubiquitinated by the UBC2-BRE1 complex to form H2BK123ub1. H2BK123ub1 gives a specific tag for epigenetic transcriptional activation and is also prerequisite for H3K4me and H3K79me formation. H2BK123ub1 also modulates the formation of double-strand breaks during meiosis and is a prerequisite for DNA-damage checkpoint activation. In terms of processing, phosphorylated by STE20 to form H2BS10ph during progression through meiotic prophase. May be correlated with chromosome condensation. Post-translationally, acetylated by GCN5 to form H2BK11ac and H2BK16ac. H2BK16ac can also be formed by ESA1. Acetylation of N-terminal lysines and particularly formation of H2BK11acK16ac has a positive effect on transcription. Sumoylation to form H2BK6su or H2BK7su, and probably also H2BK16su or H2BK17su, occurs preferentially near the telomeres and represses gene transcription.

The protein resides in the nucleus. It localises to the chromosome. Its function is as follows. Core component of nucleosome. Nucleosomes wrap and compact DNA into chromatin, limiting DNA accessibility to the cellular machineries which require DNA as a template. Histones thereby play a central role in transcription regulation, DNA repair, DNA replication and chromosomal stability. DNA accessibility is regulated via a complex set of post-translational modifications of histones, also called histone code, and nucleosome remodeling. The chain is Histone H2B.2 (HTB2) from Candida glabrata (strain ATCC 2001 / BCRC 20586 / JCM 3761 / NBRC 0622 / NRRL Y-65 / CBS 138) (Yeast).